A 527-amino-acid polypeptide reads, in one-letter code: Monooxygenase aurF (527 aa).

The first 19 residues, 1-19, serve as a signal peptide directing secretion; sequence MPNPTVAIVGLGALGLVTL. N-linked (GlcNAc...) asparagine glycosylation occurs at Asn-59.

Belongs to the FMO family. Might be part of an extracellular enzyme complex composed of GIP1, aurF, aurO and aurS. It depends on FAD as a cofactor.

The protein localises to the secreted. It localises to the extracellular space. It functions in the pathway pigment biosynthesis. In terms of biological role, monooxygenase; part of the gene cluster that mediates the biosynthesis of aurofusarin, a red mycelium pigment which is acting as a mycotoxin. The first step is performed by the polyketide synthase which condenses one acetyl-CoA and 6 malonyl-CoA units to form the first intermediate, the cyclic heptaketide and yellow pigment YWA1. The C2 hydroxyl group in the pyrone ring of YWA1 is probably formed during ring closure by an aldol-type cyclization reaction. The dehydratase aurZ then acts as the first tailoring enzyme in the aurofusarin biosynthetic pathway by converting YWA1 to nor-rubrofusarin. Nor-rubrofusarin is then methylated to rubrofusarin by the O-methyltransferase aurJ. Rubrofusarin is then transported across the plasma membrane by the rubrofusarin-specific pump aurT for further enzymatic processing by the extracellular complex composed of GIP1, aurF, aurO and aurS to yield aurofusarin. This is Monooxygenase aurF from Gibberella zeae (strain ATCC MYA-4620 / CBS 123657 / FGSC 9075 / NRRL 31084 / PH-1) (Wheat head blight fungus).